The following is a 370-amino-acid chain: Histidinol-phosphate aminotransferase 1 (370 aa).

K222 is modified (N6-(pyridoxal phosphate)lysine).

This sequence belongs to the class-II pyridoxal-phosphate-dependent aminotransferase family. Histidinol-phosphate aminotransferase subfamily. Homodimer. Pyridoxal 5'-phosphate is required as a cofactor.

It catalyses the reaction L-histidinol phosphate + 2-oxoglutarate = 3-(imidazol-4-yl)-2-oxopropyl phosphate + L-glutamate. The protein operates within amino-acid biosynthesis; L-histidine biosynthesis; L-histidine from 5-phospho-alpha-D-ribose 1-diphosphate: step 7/9. The protein is Histidinol-phosphate aminotransferase 1 of Bacillus cereus (strain ZK / E33L).